Here is a 690-residue protein sequence, read N- to C-terminus: Molting protein mlt-10 (690 aa).

Positions 1-18 (MRNLNLILFTALAAVTYA) are cleaved as a signal peptide. N-linked (GlcNAc...) asparagine glycans are attached at residues Asn-42 and Asn-204. Residues 219–285 (IKKLGEEAKR…MRKKEADEIR (67 aa)) adopt a coiled-coil conformation. 2 N-linked (GlcNAc...) asparagine glycosylation sites follow: Asn-305 and Asn-415. Transmembrane regions (helical) follow at residues 514–534 (PFIL…FIVL), 544–564 (LSPA…PLIL), 579–599 (FSPI…PGVF), 618–638 (VFTP…TPMV), and 643–663 (ILSP…FAVV).

Belongs to the mlt-10-like family. In terms of tissue distribution, expressed in the major body hypodermal syncytium (Hyp7), the dorsal and ventral ridges of the hypodermis, hypodermal cells in the head and tail, and the pharyngeal myoepithelium, but not the lateral seam cells.

The protein localises to the membrane. Its subcellular location is the secreted. Required for the efficient removal of larval cuticles during the molting cycle as well as the synthesis of new cuticles. The sequence is that of Molting protein mlt-10 from Caenorhabditis elegans.